A 334-amino-acid polypeptide reads, in one-letter code: Ketol-acid reductoisomerase (NADP(+)) (334 aa).

One can recognise a KARI N-terminal Rossmann domain in the interval 1–181; that stretch reads MNIYYDKNAD…GGGRTGILET (181 aa). NADP(+) is bound by residues 24–27, arginine 47, serine 50, serine 52, and 82–85; these read YGSQ and DEFQ. Histidine 107 is a catalytic residue. Glycine 133 provides a ligand contact to NADP(+). A KARI C-terminal knotted domain is found at 182–323; the sequence is SFKDETETDL…ESLRSMMPWI (142 aa). Aspartate 190, glutamate 194, glutamate 226, and glutamate 230 together coordinate Mg(2+). Serine 251 serves as a coordination point for substrate.

It belongs to the ketol-acid reductoisomerase family. Requires Mg(2+) as cofactor.

The catalysed reaction is (2R)-2,3-dihydroxy-3-methylbutanoate + NADP(+) = (2S)-2-acetolactate + NADPH + H(+). It carries out the reaction (2R,3R)-2,3-dihydroxy-3-methylpentanoate + NADP(+) = (S)-2-ethyl-2-hydroxy-3-oxobutanoate + NADPH + H(+). It functions in the pathway amino-acid biosynthesis; L-isoleucine biosynthesis; L-isoleucine from 2-oxobutanoate: step 2/4. It participates in amino-acid biosynthesis; L-valine biosynthesis; L-valine from pyruvate: step 2/4. Its function is as follows. Involved in the biosynthesis of branched-chain amino acids (BCAA). Catalyzes an alkyl-migration followed by a ketol-acid reduction of (S)-2-acetolactate (S2AL) to yield (R)-2,3-dihydroxy-isovalerate. In the isomerase reaction, S2AL is rearranged via a Mg-dependent methyl migration to produce 3-hydroxy-3-methyl-2-ketobutyrate (HMKB). In the reductase reaction, this 2-ketoacid undergoes a metal-dependent reduction by NADPH to yield (R)-2,3-dihydroxy-isovalerate. The protein is Ketol-acid reductoisomerase (NADP(+)) of Vesicomyosocius okutanii subsp. Calyptogena okutanii (strain HA).